Here is a 112-residue protein sequence, read N- to C-terminus: DNA-binding protein PF1087 (112 aa).

It belongs to the PDCD5 family.

The protein is DNA-binding protein PF1087 of Pyrococcus furiosus (strain ATCC 43587 / DSM 3638 / JCM 8422 / Vc1).